The primary structure comprises 153 residues: Large ribosomal subunit protein uL22 (153 aa).

Belongs to the universal ribosomal protein uL22 family. In terms of assembly, part of the 50S ribosomal subunit.

In terms of biological role, this protein binds specifically to 23S rRNA. It makes multiple contacts with different domains of the 23S rRNA in the assembled 50S subunit and ribosome. Its function is as follows. The globular domain of the protein is located near the polypeptide exit tunnel on the outside of the subunit, while an extended beta-hairpin is found that lines the wall of the exit tunnel in the center of the 70S ribosome. In Methanocella arvoryzae (strain DSM 22066 / NBRC 105507 / MRE50), this protein is Large ribosomal subunit protein uL22.